Reading from the N-terminus, the 546-residue chain is Amidase FG08078 (546 aa).

Active-site charge relay system residues include K129 and S204. Catalysis depends on S228, which acts as the Acyl-ester intermediate.

Belongs to the amidase family.

It participates in mycotoxin biosynthesis. Amidase; part of the gene cluster that mediates the biosynthesis of butenolide, a mycotoxin that shows antibiotic activity but does not seem to play a major role in the spread of head blight in wheat. Butenolide is derived from glutamic acid via a 4-acetamido-2-butenoic acid intermediate. The predicted function of the NADH:flavin oxidoreductase FG08077, the cytochrome P450 monooxygenase FG08079, the decarboxylase FG08083, and the putative acetyltransferase FG08082 are consistent with this pathway, however, the respective activities of the butelonide biosynthesis cluster enzymes have still to be experimentally determined. In Gibberella zeae (strain ATCC MYA-4620 / CBS 123657 / FGSC 9075 / NRRL 31084 / PH-1) (Wheat head blight fungus), this protein is Amidase FG08078.